The following is a 78-amino-acid chain: Leukemia-associated protein 1 (78 aa).

May act as a tumor suppressor. This chain is Leukemia-associated protein 1 (DLEU1), found in Homo sapiens (Human).